Reading from the N-terminus, the 229-residue chain is UPF0758 protein CLL_A0562 (229 aa).

In terms of domain architecture, MPN spans Lys107–Ile229. Residues His178, His180, and Asp191 each coordinate Zn(2+). A JAMM motif motif is present at residues His178–Asp191.

Belongs to the UPF0758 family.

The chain is UPF0758 protein CLL_A0562 from Clostridium botulinum (strain Eklund 17B / Type B).